Consider the following 441-residue polypeptide: Membrane protein PB1A10.07c (441 aa).

The next 11 helical transmembrane spans lie at 1–21, 41–61, 97–117, 128–148, 158–178, 206–226, 235–255, 263–283, 307–327, 364–384, and 415–435; these read MGAVLSIPLALASSLSGVVGI, VGAVISYAVLYFVNSLLSWCM, LSFTLVMFHLFLAFILSLCNT, GLWPFKIVLWFVLGIFSFFIP, IISVMGSALFIVYGLMLLVDF, TVGMYVVGLVLTILTYVFFCA, INTINLLLCIAVSCLSVHPTI, GLAQSSMVMCYTCYLILSALA, VIGAAFTFFTILYSAVRAASS, YNFIWFHIVFVLAAFYTASLL, and IITSWVCHGLYVWSCLAPVFF.

It belongs to the TDE1 family.

Its subcellular location is the membrane. The polypeptide is Membrane protein PB1A10.07c (Schizosaccharomyces pombe (strain 972 / ATCC 24843) (Fission yeast)).